The chain runs to 341 residues: Ketol-acid reductoisomerase (NADP(+)) (341 aa).

Residues 2–182 (TDIVYDKDAD…GGLRAGGIRT (181 aa)) enclose the KARI N-terminal Rossmann domain. NADP(+) is bound by residues 25–28 (YGSQ), lysine 48, serine 51, serine 53, and 83–86 (DQHQ). Histidine 108 is a catalytic residue. Glycine 134 is an NADP(+) binding site. In terms of domain architecture, KARI C-terminal knotted spans 183-328 (TFTEETETDL…RELRKLFAWN (146 aa)). Mg(2+) is bound by residues aspartate 191, glutamate 195, glutamate 227, and glutamate 231. Residue serine 252 participates in substrate binding.

This sequence belongs to the ketol-acid reductoisomerase family. Requires Mg(2+) as cofactor.

It catalyses the reaction (2R)-2,3-dihydroxy-3-methylbutanoate + NADP(+) = (2S)-2-acetolactate + NADPH + H(+). The enzyme catalyses (2R,3R)-2,3-dihydroxy-3-methylpentanoate + NADP(+) = (S)-2-ethyl-2-hydroxy-3-oxobutanoate + NADPH + H(+). The protein operates within amino-acid biosynthesis; L-isoleucine biosynthesis; L-isoleucine from 2-oxobutanoate: step 2/4. It functions in the pathway amino-acid biosynthesis; L-valine biosynthesis; L-valine from pyruvate: step 2/4. In terms of biological role, involved in the biosynthesis of branched-chain amino acids (BCAA). Catalyzes an alkyl-migration followed by a ketol-acid reduction of (S)-2-acetolactate (S2AL) to yield (R)-2,3-dihydroxy-isovalerate. In the isomerase reaction, S2AL is rearranged via a Mg-dependent methyl migration to produce 3-hydroxy-3-methyl-2-ketobutyrate (HMKB). In the reductase reaction, this 2-ketoacid undergoes a metal-dependent reduction by NADPH to yield (R)-2,3-dihydroxy-isovalerate. The chain is Ketol-acid reductoisomerase (NADP(+)) from Clavibacter sepedonicus (Clavibacter michiganensis subsp. sepedonicus).